Reading from the N-terminus, the 1318-residue chain is Serine/threonine-protein kinase ppk18 (1318 aa).

A disordered region spans residues 431-485 (PSVSPEEVHDISQFNHRNDPPITAASVDSSNSFSVHRSSTNHSSTNSGSPNLSRR). The span at 462–479 (SFSVHRSSTNHSSTNSGS) shows a compositional bias: low complexity. A Protein kinase domain is found at 566-934 (YEIIKPISKG…INEIKEHPFF (369 aa)). ATP-binding positions include 572-580 (ISKGTFGTV) and Lys595. The active-site Proton acceptor is the Asp690. Positions 935–1044 (NGINWDDIFS…KNLSVLERAN (110 aa)) constitute an AGC-kinase C-terminal domain. Disordered stretches follow at residues 968-1022 (GAAE…FSEA), 1058-1078 (KLHI…DMPS), and 1091-1127 (SLMT…GPKS). Residues 972 to 1000 (SNMSSSVNSGEEVSKDNNVSQERGSQFLR) show a composition bias toward polar residues. Positions 1091–1115 (SLMTNQGSNFSSTDSTPRKSINSSD) are enriched in polar residues. Residues 1116–1127 (VESRSKTDGPKS) show a composition bias toward basic and acidic residues. The Response regulatory domain occupies 1200-1316 (KALICVSKLN…LLRGYIARLC (117 aa)).

Belongs to the protein kinase superfamily. Ser/Thr protein kinase family.

Its subcellular location is the cytoplasm. It carries out the reaction L-seryl-[protein] + ATP = O-phospho-L-seryl-[protein] + ADP + H(+). The enzyme catalyses L-threonyl-[protein] + ATP = O-phospho-L-threonyl-[protein] + ADP + H(+). This chain is Serine/threonine-protein kinase ppk18 (ppk18), found in Schizosaccharomyces pombe (strain 972 / ATCC 24843) (Fission yeast).